The following is a 245-amino-acid chain: Ninjurin-A (245 aa).

The Extracellular portion of the chain corresponds to 1-170 (MSNLEHITLE…TSSQHPYFYP (170 aa)). 2 N-linked (GlcNAc...) asparagine glycosylation sites follow: N19 and N28. Residues 32–101 (HSYGGAIDGR…NVNVNVPNGG (70 aa)) form a disordered region. The span at 92–101 (NVNVNVPNGG) shows a compositional bias: low complexity. Residues 135-146 (KKTLAQGMMDLA) form a helix alpha1 region. The tract at residues 149–165 (SANANQLRYVLETSSQH) is helix alpha2. The helical transmembrane segment at 171 to 191 (SLLFISLSIIFQIAVGVGLIL) threads the bilayer. Topologically, residues 192–211 (NGQYNIKNGHDICRANRINN) are cytoplasmic. The chain crosses the membrane as a helical span at residues 212–232 (YTVSGIFIVTVVNVLISAFTV). Residues 233-245 (DRDTVPALPANTT) lie on the Extracellular side of the membrane.

The protein belongs to the ninjurin family. In terms of assembly, homooligomer. Post-translationally, cleaved by Mmp1 protease to generate the Secreted ninjurin-A form.

The protein localises to the cell membrane. It is found in the secreted. In terms of biological role, effector of non-apoptotic necrotic cell death that mediates plasma membrane rupture (cytolysis): oligomerizes in response to death stimuli and promotes plasma membrane rupture by introducing hydrophilic faces of 2 alpha helices into the hydrophobic membrane, leading to release intracellular molecules that propagate the inflammatory response. Also acts as a homophilic transmembrane adhesion molecule that promotes cell adhesion by mediating homophilic interactions via its extracellular region. Its function is as follows. Secreted form generated by cleavage, which acts as a negative regulator of cell adhesion. Promotes the loss of cell adhesion in a cell non-autonomous manner. The sequence is that of Ninjurin-A from Drosophila melanogaster (Fruit fly).